Reading from the N-terminus, the 267-residue chain is Type III pantothenate kinase (267 aa).

Residue 6 to 13 (DSGNSRLK) participates in ATP binding. Substrate-binding positions include tyrosine 96 and 103-106 (GADR). The active-site Proton acceptor is aspartate 105. An ATP-binding site is contributed by threonine 131. Position 181 (threonine 181) interacts with substrate.

It belongs to the type III pantothenate kinase family. In terms of assembly, homodimer. NH4(+) is required as a cofactor. Requires K(+) as cofactor.

It localises to the cytoplasm. It catalyses the reaction (R)-pantothenate + ATP = (R)-4'-phosphopantothenate + ADP + H(+). It participates in cofactor biosynthesis; coenzyme A biosynthesis; CoA from (R)-pantothenate: step 1/5. Catalyzes the phosphorylation of pantothenate (Pan), the first step in CoA biosynthesis. The chain is Type III pantothenate kinase from Bordetella bronchiseptica (strain ATCC BAA-588 / NCTC 13252 / RB50) (Alcaligenes bronchisepticus).